Here is a 487-residue protein sequence, read N- to C-terminus: MVASAPASAGTKGVIRQVIGPVLDVEFPAGKLPKIYNALRIEGKNPAGDDVALTAEVQQLLGDHRVRAVAMSGTDGLVRGMEAVDTGAPISVPVGEGTLGRIFNVLGEPVDEQGPVNTTATAPIHRDAPNITELETKPKVFETGIKVIDLLAPYRQGGKVGLFGGAGVGKTVLIQELINNIAKEHGGVSVFGGVGERTREGNDLYEEFKESGVINADDLSKSKVALCYGQMNEPPGARMRVGLSALTMAEHFRDVNKQDVLLFVDNIFRFVQAGSEVSALLGRMPSAVGYQPTLGTDVGALQERVASTVEGSITSIQAVYVPADDLTDPAPATTFAHLDATTVLNRALASKGIYPAVDPLDSTSTMLQPAVVGDEHYRTARAVQSTLQRYKELQDIIAILGLDELSEDDRRTVDRARKVEKFLSQPFFVAEIFTGMPGKYVKLEETIAGFNQILAGELDSLPEAAFYLVGNIEEVKAKAEKIAAETK.

An ATP-binding site is contributed by 164 to 171 (GGAGVGKT).

It belongs to the ATPase alpha/beta chains family. As to quaternary structure, F-type ATPases have 2 components, CF(1) - the catalytic core - and CF(0) - the membrane proton channel. CF(1) has five subunits: alpha(3), beta(3), gamma(1), delta(1), epsilon(1). CF(0) has four main subunits: a(1), b(1), b'(1) and c(9-12).

It localises to the cellular thylakoid membrane. It catalyses the reaction ATP + H2O + 4 H(+)(in) = ADP + phosphate + 5 H(+)(out). Functionally, produces ATP from ADP in the presence of a proton gradient across the membrane. The catalytic sites are hosted primarily by the beta subunits. In Synechococcus sp. (strain CC9605), this protein is ATP synthase subunit beta.